A 164-amino-acid polypeptide reads, in one-letter code: ATP synthase subunit b (164 aa).

A helical membrane pass occupies residues 5 to 25 (IGELIGNFILVAGSFLLLIVL).

It belongs to the ATPase B chain family. In terms of assembly, F-type ATPases have 2 components, F(1) - the catalytic core - and F(0) - the membrane proton channel. F(1) has five subunits: alpha(3), beta(3), gamma(1), delta(1), epsilon(1). F(0) has three main subunits: a(1), b(2) and c(10-14). The alpha and beta chains form an alternating ring which encloses part of the gamma chain. F(1) is attached to F(0) by a central stalk formed by the gamma and epsilon chains, while a peripheral stalk is formed by the delta and b chains.

The protein localises to the cell membrane. In terms of biological role, f(1)F(0) ATP synthase produces ATP from ADP in the presence of a proton or sodium gradient. F-type ATPases consist of two structural domains, F(1) containing the extramembraneous catalytic core and F(0) containing the membrane proton channel, linked together by a central stalk and a peripheral stalk. During catalysis, ATP synthesis in the catalytic domain of F(1) is coupled via a rotary mechanism of the central stalk subunits to proton translocation. Component of the F(0) channel, it forms part of the peripheral stalk, linking F(1) to F(0). The sequence is that of ATP synthase subunit b from Streptococcus gordonii (strain Challis / ATCC 35105 / BCRC 15272 / CH1 / DL1 / V288).